A 66-amino-acid polypeptide reads, in one-letter code: Transmembrane protein B66L (66 aa).

Positions 1-20 (MDIKRALILFLLFLVVLSNA) are cleaved as a signal peptide. Residues 21–40 (FVDYIISNFNHAVTCRKPTY) are Extracellular-facing. The chain crosses the membrane as a helical span at residues 41–61 (FGIVLQGIFLVILFSIVDYLI). Topologically, residues 62–66 (NENIL) are cytoplasmic.

It belongs to the asfivirus B66L family.

Its subcellular location is the host membrane. This chain is Transmembrane protein B66L, found in Ornithodoros (relapsing fever ticks).